The sequence spans 314 residues: MAQNGKKKIGLIGGGQIGGNLALLAVQKSLGDVVLYDIPAAEGLVKGKALDINQLAAVDGYDCRVKGTTDWKDVAGSDVIIITAGMPRKPGMSREDLLEINLKIMTDVAGNIKQHAPNAFVINVANPLDAMVFALHKIAGLPKHMVAGMAGVLDTSRFKCFVAEALGCSIRDVEALVLGGHGDDMVPLVRHSTVGGVPLTELIAKDKLDAIIKRTREGGAELVGLYKTGSAYFGPAASAIAMAESFLQDRKRVLPAAALLEGQYGINGYFFGVPVQIGAGGVEKIHTVELNDGEKAELEKSFQSVKKTVDSVKL.

NAD(+) contacts are provided by residues 13–18 and aspartate 37; that span reads GGGQIG. Residues arginine 88 and arginine 94 each coordinate substrate. Residues asparagine 101 and 124-126 each bind NAD(+); that span reads VAN. The substrate site is built by asparagine 126 and arginine 157. Histidine 181 serves as the catalytic Proton acceptor.

The protein belongs to the LDH/MDH superfamily. MDH type 3 family.

The catalysed reaction is (S)-malate + NAD(+) = oxaloacetate + NADH + H(+). Its function is as follows. Catalyzes the reversible oxidation of malate to oxaloacetate. The chain is Malate dehydrogenase from Myxococcus xanthus.